Reading from the N-terminus, the 126-residue chain is uncharacterized protein (126 aa).

The HTH hxlR-type domain maps to 8 to 106 (ISVEATLEVI…WGANHINRVY (99 aa)).

This is an uncharacterized protein from Bacillus subtilis (strain 168).